Reading from the N-terminus, the 261-residue chain is DNA repair protein RecO (261 aa).

Belongs to the RecO family.

Its function is as follows. Involved in DNA repair and RecF pathway recombination. The protein is DNA repair protein RecO of Mycobacteroides abscessus (strain ATCC 19977 / DSM 44196 / CCUG 20993 / CIP 104536 / JCM 13569 / NCTC 13031 / TMC 1543 / L948) (Mycobacterium abscessus).